We begin with the raw amino-acid sequence, 461 residues long: Phytase A (461 aa).

Cys22 and Cys31 are disulfide-bonded. 1D-myo-inositol hexakisphosphate-binding residues include Gln41, Tyr42, Arg71, His72, Arg75, and Thr78. 4 disulfide bridges follow: Cys61/Cys405, Cys205/Cys456, Cys254/Cys272, and Cys427/Cys435. His72 serves as the catalytic Nucleophile. Residues Asn95 and Asn110 are each glycosylated (N-linked (GlcNAc...) asparagine). Arg155 provides a ligand contact to 1D-myo-inositol hexakisphosphate. Residue Asn197 is glycosylated (N-linked (GlcNAc...) asparagine). Residue Lys291 participates in 1D-myo-inositol hexakisphosphate binding. 2 N-linked (GlcNAc...) asparagine glycosylation sites follow: Asn329 and Asn343. Residues His352 and Asp353 each coordinate 1D-myo-inositol hexakisphosphate. N-linked (GlcNAc...) asparagine glycosylation is present at Asn367.

Belongs to the histidine acid phosphatase family. Monomer. In terms of processing, glycosylated.

It is found in the secreted. It catalyses the reaction 1D-myo-inositol hexakisphosphate + H2O = 1D-myo-inositol 1,2,4,5,6-pentakisphosphate + phosphate. The catalysed reaction is 1D-myo-inositol 1,2,4,5,6-pentakisphosphate + H2O = 1D-myo-inositol 1,2,5,6-tetrakisphosphate + phosphate. It carries out the reaction 1D-myo-inositol 1,2,5,6-tetrakisphosphate + H2O = 1D-myo-inositol 1,2,6-trisphosphate + phosphate. The enzyme catalyses 1D-myo-inositol 1,2,6-trisphosphate + H2O = 1D-myo-inositol 1,2-bisphosphate + phosphate. It catalyses the reaction 1D-myo-inositol 1,2-bisphosphate + H2O = 1D-myo-inositol 2-phosphate + phosphate. In terms of biological role, catalyzes the phosphate monoester hydrolysis of phytic acid (myo-inositol hexakisphosphate), which results in the stepwise formation of myo-inositol pentakis-, tetrakis-, tris-, bis-, and monophosphates, as well as the liberation of inorganic phosphate. Myo-inositol 2-monophosphate is the end product. This Penicillium oxalicum protein is Phytase A.